A 228-amino-acid chain; its full sequence is Lipoprotein-releasing system ATP-binding protein LolD (228 aa).

The ABC transporter domain occupies 5-228 (FALSAISKSF…SGTLQNYTDY (224 aa)). 40-47 (GPSGSGKS) serves as a coordination point for ATP.

The protein belongs to the ABC transporter superfamily. Lipoprotein translocase (TC 3.A.1.125) family. As to quaternary structure, the complex is composed of two ATP-binding proteins (LolD) and two transmembrane proteins (LolC and LolE).

It localises to the cell inner membrane. Part of the ABC transporter complex LolCDE involved in the translocation of mature outer membrane-directed lipoproteins, from the inner membrane to the periplasmic chaperone, LolA. Responsible for the formation of the LolA-lipoprotein complex in an ATP-dependent manner. The sequence is that of Lipoprotein-releasing system ATP-binding protein LolD from Ehrlichia ruminantium (strain Gardel).